The chain runs to 85 residues: Probable Thioredoxin (85 aa).

The region spanning 2 to 85 is the Glutaredoxin domain; the sequence is VVNIEVFTSP…LFEAINDEME (84 aa). Cys13 and Cys16 form a disulfide bridge.

This sequence belongs to the glutaredoxin family.

It is found in the cytoplasm. Functionally, acts to maintain redox homeostasis; functions as a protein disulfide reductase. The protein is Probable Thioredoxin of Methanothermobacter thermautotrophicus (strain ATCC 29096 / DSM 1053 / JCM 10044 / NBRC 100330 / Delta H) (Methanobacterium thermoautotrophicum).